We begin with the raw amino-acid sequence, 76 residues long: Large ribosomal subunit protein bL31 (76 aa).

Belongs to the bacterial ribosomal protein bL31 family. Type A subfamily. As to quaternary structure, part of the 50S ribosomal subunit.

Binds the 23S rRNA. This Methylocella silvestris (strain DSM 15510 / CIP 108128 / LMG 27833 / NCIMB 13906 / BL2) protein is Large ribosomal subunit protein bL31.